We begin with the raw amino-acid sequence, 996 residues long: Leucine-rich repeat receptor-like kinase protein THICK TASSEL DWARF1 (996 aa).

A signal peptide spans 1 to 26 (MPPPTFLLGLLLLLLLAAAAPAPASA). LRR repeat units follow at residues 78–103 (TSRVVAINLTAVPLHGGALPPEVALL), 104–127 (DALASLTVANCYLRGRLPPALASM), 128–151 (PALRHLNLSNNNLSGPFPPPPPAA), 153–178 (FPALEIVDVYNNNLSGPLPPLGAPHA), 180–201 (SLRYLHLGGNYFNGSIPDTFGD), 202–226 (LAALEYLGLNGNALSGRVPPSLSRL), 251–275 (LQSLVRLDMSSCTLTGPIPPELARL), 276–299 (SRLDTLFLALNQLTGEIPPELGAL), 300–323 (TSLRSLDLSINDLAGEIPASFAAL), 325–349 (NLKLLNLFRNHLRGEIPAFLGDFPF), 351–371 (EVLQVWDNNLTGPLPPALGRN), 372–395 (GRLKTLDVTSNHLTGTIPPDLCAG), 397–419 (NLQLLVLMDNGFFGSIPESLGDC), 420–443 (KTLTRVRLGKNFLTGPVPAGLFDL), 445–466 (QANMLELTDNMLTGELPDVIAG), 467–490 (DKIGMLMLGNNRIGGRIPAAIGNL), 491–514 (PALQTLSLESNNFSGPLPPEIGRL), 516–538 (NLTRLNASGNALTGGIPRELMGC), 539–562 (ASLGAVDLSRNGLTGEIPDTVTSL), 563–586 (KILCTLNVSRNRLSGELPAAMANM), and 587–611 (TSLTTLDVSYNQLSGPVPMQGQFLV). The helical transmembrane segment at 646-666 (KKLLVWLVVLLTLLVLAVLGA) threads the bilayer. The Protein kinase domain maps to 703-978 (LKEDNIIGKG…TMREVVHMLS (276 aa)). Residues 709 to 717 (IGKGGAGIV) and Lys-731 each bind ATP. Asp-828 acts as the Proton acceptor in catalysis.

This sequence belongs to the protein kinase superfamily. Ser/Thr protein kinase family. As to expression, highly expressed in the apex of the vegetative seedlings. Lower expression in young leaves, ears and tassels, embryos and roots. Not expressed in the shoot meristem itself. Detected in the three outermost layers of the inflorescence meristem, and on its flanks at positions of prospective spikelet pair meristems. Not confined to meristematic cells but also detected in primordia of glumes, lemmas and stamens.

It is found in the membrane. It catalyses the reaction L-seryl-[protein] + ATP = O-phospho-L-seryl-[protein] + ADP + H(+). The enzyme catalyses L-threonyl-[protein] + ATP = O-phospho-L-threonyl-[protein] + ADP + H(+). Its function is as follows. Receptor-like kinase protein that regulates meristem size during inflorescence and flower development. Promotes vegetative meristem growth and restricts inflorescence and floral meristem growth. Based on additive and synergistic phenotypes of double mutants, it is probable that unlike CLV1 and CLV2 in A.thaliana, TD1 and FAE2 do not function exclusively in a single pathway. However, KN-1 and TD1 do function in a linear pathway to maintain vegetative meristem homeostasis, but they may interact with different partners during development. The protein is Leucine-rich repeat receptor-like kinase protein THICK TASSEL DWARF1 (TD1) of Zea mays (Maize).